The sequence spans 217 residues: Uracil-DNA glycosylase (217 aa).

The active-site Proton acceptor is the D62.

Belongs to the uracil-DNA glycosylase (UDG) superfamily. UNG family.

Its subcellular location is the cytoplasm. The catalysed reaction is Hydrolyzes single-stranded DNA or mismatched double-stranded DNA and polynucleotides, releasing free uracil.. Excises uracil residues from the DNA which can arise as a result of misincorporation of dUMP residues by DNA polymerase or due to deamination of cytosine. In Streptococcus pyogenes serotype M6 (strain ATCC BAA-946 / MGAS10394), this protein is Uracil-DNA glycosylase.